Consider the following 319-residue polypeptide: Glutamyl-Q tRNA(Asp) synthetase (319 aa).

Residues 23–27 (RFAPS) and glutamate 59 contribute to the L-glutamate site. The 'HIGH' region motif lies at 26–36 (PSPSGPLHAGS). The Zn(2+) site is built by cysteine 115, cysteine 117, tyrosine 139, and cysteine 143. Tyrosine 197 and arginine 215 together coordinate L-glutamate. Positions 254–258 (KLSKQ) match the 'KMSKS' region motif. Lysine 257 contacts ATP.

It belongs to the class-I aminoacyl-tRNA synthetase family. GluQ subfamily. Requires Zn(2+) as cofactor.

Functionally, catalyzes the tRNA-independent activation of glutamate in presence of ATP and the subsequent transfer of glutamate onto a tRNA(Asp). Glutamate is transferred on the 2-amino-5-(4,5-dihydroxy-2-cyclopenten-1-yl) moiety of the queuosine in the wobble position of the QUC anticodon. This is Glutamyl-Q tRNA(Asp) synthetase from Bordetella bronchiseptica (strain ATCC BAA-588 / NCTC 13252 / RB50) (Alcaligenes bronchisepticus).